The following is a 56-amino-acid chain: Large ribosomal subunit protein bL32 (56 aa).

This sequence belongs to the bacterial ribosomal protein bL32 family.

The chain is Large ribosomal subunit protein bL32 from Brevibacillus brevis (strain 47 / JCM 6285 / NBRC 100599).